The following is a 493-amino-acid chain: Chromosomal replication initiator protein DnaA (493 aa).

The domain I, interacts with DnaA modulators stretch occupies residues 1–105 (MSDTIQQEAP…LMYSIVIDKS (105 aa)). The segment at 105–152 (SQGQPVTIELPHQIDAAPAERSVRPEAPGQKASAERERLEIARPRFES) is domain II. A disordered region spans residues 121-140 (APAERSVRPEAPGQKASAER). Positions 153 to 370 (NLNPKYTFST…GCIVKLLAAH (218 aa)) are domain III, AAA+ region. ATP contacts are provided by glycine 198, glycine 200, lysine 201, and threonine 202. The domain IV, binds dsDNA stretch occupies residues 371-493 (SLDNQEIDLQ…LRKRIEIMSM (123 aa)).

Belongs to the DnaA family. Oligomerizes as a right-handed, spiral filament on DNA at oriC.

Its subcellular location is the cytoplasm. Its function is as follows. Plays an essential role in the initiation and regulation of chromosomal replication. ATP-DnaA binds to the origin of replication (oriC) to initiate formation of the DNA replication initiation complex once per cell cycle. Binds the DnaA box (a 9 base pair repeat at the origin) and separates the double-stranded (ds)DNA. Forms a right-handed helical filament on oriC DNA; dsDNA binds to the exterior of the filament while single-stranded (ss)DNA is stabiized in the filament's interior. The ATP-DnaA-oriC complex binds and stabilizes one strand of the AT-rich DNA unwinding element (DUE), permitting loading of DNA polymerase. After initiation quickly degrades to an ADP-DnaA complex that is not apt for DNA replication. Binds acidic phospholipids. The polypeptide is Chromosomal replication initiator protein DnaA (Chlorobaculum tepidum (strain ATCC 49652 / DSM 12025 / NBRC 103806 / TLS) (Chlorobium tepidum)).